The primary structure comprises 1024 residues: NLR family CARD domain-containing protein 4 (1024 aa).

One can recognise a CARD domain in the interval 1 to 88 (MNFIKDNSRA…PLFQDLNGQS (88 aa)). The tract at residues 95–298 (EGDLDDLAQD…QFGALTAEVG (204 aa)) is nucleotide-binding domain (NBD). The 314-residue stretch at 163 to 476 (SPCIIEGESG…VTKGNGYLQK (314 aa)) folds into the NACHT domain. 169-176 (GESGKGKS) lines the ATP pocket. The segment at 356–463 (SHTQTTLFHT…RLSSLLTSHE (108 aa)) is winged-helix domain (WHD). Ser533 is subject to Phosphoserine. LRR repeat units follow at residues 578-598 (FFQG…LFDF), 656-679 (KQEF…DIRY), 735-758 (VTNL…LTDS), 762-785 (LKNL…KLAE), 787-812 (LKNL…DYIV), 824-847 (EIQL…LHNL), 848-870 (VKLS…ALHE), 878-902 (LEQL…LLKH), 911-933 (KLGL…FFGK), 936-963 (LKNF…VFEN), 965-985 (KQLV…ALVR), and 999-1021 (EARL…AFKL).

In terms of assembly, homooligomer; homooligomerizes to induce formation of the NLRC4 inflammasome. Homooligomerizes following activation by pathogenic proteins. Component of the NLRC4 inflammasome, at least composed of NLRC4 and caspase-1 (CASP1). Some NLRC4 inflammasomes contain PYCARD/ASC, while some others directly contact and activate CASP1. Interacts (via CARD domain) with PYCARD/ASC, pro-caspase-1 (CASP1), NOD2, BCL10 and NALP1 (NAC) by CARD-CARD interaction. Interacts with EIF2AK2/PKR. Post-translationally, phosphorylated at Ser-533 following infection of macrophages with S.typhimurium (Salmonella). Phosphorylation is essential for NLRC4 inflammasome function to promote caspase-1 activation and pyroptosis. PRKCD phosphorylates Ser-533 in vitro. Isoform 2 is expressed ubiquitously, although highly expressed in lung and spleen. Isoform 1 is highly expressed in lung, followed by leukocytes especially monocytes, lymph node, colon, brain, prostate, placenta, spleen, bone marrow and fetal liver. Isoform 4 is only detected in brain.

The protein localises to the cytoplasm. It is found in the cytosol. The protein resides in the inflammasome. In terms of biological role, key component of inflammasomes that indirectly senses specific proteins from pathogenic bacteria and fungi and responds by assembling an inflammasome complex that promotes caspase-1 activation, cytokine production and macrophage pyroptosis. The NLRC4 inflammasome is activated as part of the innate immune response to a range of intracellular bacteria. This is NLR family CARD domain-containing protein 4 (NLRC4) from Homo sapiens (Human).